The chain runs to 87 residues: Conotoxin Bt15a (87 aa).

The N-terminal stretch at 1–23 (MEKLTILVLVATVLLAIQVLVQS) is a signal peptide. Residues 24–49 (DGEKPLKRRVKQYAAKRLSALMRGPR) constitute a propeptide that is removed on maturation. At glutamine 50 the chain carries Pyrrolidone carboxylic acid.

Belongs to the conotoxin O2 superfamily. Post-translationally, contains 4 disulfide bonds. As to expression, expressed by the venom duct.

The protein localises to the secreted. This chain is Conotoxin Bt15a, found in Conus betulinus (Beech cone).